Consider the following 122-residue polypeptide: Small ribosomal subunit protein bS6 (122 aa).

It belongs to the bacterial ribosomal protein bS6 family.

Its function is as follows. Binds together with bS18 to 16S ribosomal RNA. This is Small ribosomal subunit protein bS6 from Trichlorobacter lovleyi (strain ATCC BAA-1151 / DSM 17278 / SZ) (Geobacter lovleyi).